Here is a 519-residue protein sequence, read N- to C-terminus: MIIGLSDAFALGGIALSFLVAYQFIYFYFIYSPRAKKLGCAPPVIVFSFPLGLPALYKFATAMLHDNLLEYISIRIADMKVRTGFQTLAGQRWLVTLEPENIKTVLATSFKDYSLGFRYDIMYGLLGNGIFTLSGDGWKHSRALLRPQFSREQVSHLESMRTHINLMINNHFKGGQVVDAQALYHNLTIDTATEFLFGESTNTLDPDLAQQGLPGPKGLVTGEQFAEAFTSALEILSVRVIVGAAWFLIWTPKFWRSCKVCHNFIDYFVYKALATPMEKDQEADRYVFIRELTKETSDPRVIRDQALNILLAGRDTTAGLLSFITYYLGAYPEVYAELREAVLSEFGSTDVETPTFEQLKQCKVLQNVIREVLRLHPNVPLNFRQAIVDTKLPTGGGPNGDQPVFVPKGQNVFYSTYSMQRRTDIWGPDATTFRPDRWNEPREALASGWDYIPFNGGPRICLGQQFALTEASYTIVRICQEFSRIEVLHPDVITSKNSMKQRMRLTQTASGGVITRFIR.

2 consecutive transmembrane segments (helical) span residues 10-30 and 44-64; these read ALGG…FYFI and VIVF…TAML. C479 contacts heme.

Belongs to the cytochrome P450 family. The cofactor is heme.

Its subcellular location is the membrane. Its function is as follows. Together with an NADPH cytochrome P450 the enzyme system catalyzes the terminal hydroxylation as the first step in the assimilation of alkanes and fatty acids. The chain is Cytochrome P450 52E1 (CYP52E1) from Candida apicola (Yeast).